Reading from the N-terminus, the 295-residue chain is MACIENVLGGHAPSPTAVAAAENGNREPRPSLPFQCPKDDAGSWGHPGVPLRPPFKVLSDLARERLERPSERTGSCIPVDGWRALKPPYGPPPAVAEEPLATGEVNSSEGPAGWRQSGQDSINNVSQEFSGSPPALMVGGTKVSNGGTERGGSNAGLYVALPRGQGFFPSRGPQVRGPTHISTLRSGIMMELPPGSTRVTGKERLARVSFPLGGPRHPVKNWPRPMPLASSTTGLGSRTTAHCFIPPRPPSFNPFLAMPMAFAPPPIFGPPLPSCFADFPSWGMPAPASSNRENN.

2 disordered regions span residues 10-48 (GHAP…GHPG) and 101-120 (ATGE…SGQD).

The polypeptide is Proline-rich protein 32 (PRR32) (Bos taurus (Bovine)).